The primary structure comprises 266 residues: Hemin import ATP-binding protein HmuV (266 aa).

In terms of domain architecture, ABC transporter spans leucine 12 to aspartate 248. ATP is bound at residue glycine 44–serine 51.

The protein belongs to the ABC transporter superfamily. Heme (hemin) importer (TC 3.A.1.14.5) family. As to quaternary structure, the complex is composed of two ATP-binding proteins (HmuV), two transmembrane proteins (HmuU) and a solute-binding protein (HmuT).

The protein localises to the cell inner membrane. Part of the ABC transporter complex HmuTUV involved in hemin import. Responsible for energy coupling to the transport system. In Yersinia pestis bv. Antiqua (strain Antiqua), this protein is Hemin import ATP-binding protein HmuV.